Here is an 844-residue protein sequence, read N- to C-terminus: MFTHLTRAFRKMNNLVNRSFIDVHRVVAELSYPEFEEDVKNPESSIYRTPISLFQNKDIVTIVGDYILSPKTDSFQVLYPIKKVIEHFPVIFHCTHNNAPLWVHLLDERHHRLLQSLLTYEIVNAKYRGIVVIPYYRRPINYQTGKSLLMSKLASVKVLDILMRCGSYKFISLMCMINKKNNTNFLHCCASKWGEVGSKMMLHIAEMFFANPTTSQHLSDASSFPDAAAEDDKGKTPAHLAIQEDNADALLFLISLYGAPWFQDNNSYMKSALELKSNKCVKVLSFAADKYEILPNINNNQLEPDTMCGVCATSVEEDENEGKTTSLSWYQMNCKHYIHCECLMGMCAAAGNVQCPMCREDVGDEVLERCPPTIFRWLKLAERSEHNRVLFEAKKQEFYKQMEAMKPPRVVVPPRRTFLTPARRGERAIRIAREIATNAIAEATAQGDVNSYFPVLIDGSGEEYEEEGEEFFNSEEEALAFGRPFLEDEEEARQIQMRQFAELSRRGVSVNIINNDNPHRHISTVNIVQPVYGVEKSPAASFIYNMLKNDVFESIRSRDTRVGGERVPVMNLSNDKRALFHAASSMLCDFATETNSQIVGLDFQAVYDPHHISNYIETFGSPLHAYPGAVTFLDGAQDYYAESIRYDNDIVSFSEMASELHITEALDVFEGSLLSPLFKKIRTGKSYSNWNDHLRRRNYARDIAEEFVRVCENSLASREHPPVHVHPFRDGAIPILIEYIVDFIHHCITWSMQVNALHCMRKYIEHENTNVHLLNLRPTDERVEVLRVSQLRWSRLFNEQYNTRMSLSTKRLSLMKIFNHDLGVSKFGVYKLLDIIEMYCFTLI.

229–236 (AEDDKGKT) is a binding site for ATP. The RING-type; atypical zinc-finger motif lies at 308–359 (CGVCATSVEEDENEGKTTSLSWYQMNCKHYIHCECLMGMCAAAGNVQCPMCR).

In terms of assembly, interacts with host UBE2E1/UBCH6; this interaction results in WSV222 auto-ubiquitination. Interacts with host tumor suppressor-like protein.

The enzyme catalyses S-ubiquitinyl-[E2 ubiquitin-conjugating enzyme]-L-cysteine + [acceptor protein]-L-lysine = [E2 ubiquitin-conjugating enzyme]-L-cysteine + N(6)-ubiquitinyl-[acceptor protein]-L-lysine.. It functions in the pathway protein modification; protein ubiquitination. Its function is as follows. Probable E3 ubiquitin-protein ligase which accepts ubiquitin from the E2 ubiquitin-conjugating enzyme UBE2E1/UBCH6 in the form of a thioester and then directly transfers the ubiquitin to targeted substrates. Mediates ubiquitination of host tumor-suppressor-like protein (TSL) targeting it for degradation. Might function as an anti-apoptosis protein by counteracting TSL-induced apoptosis. This is RING finger containing E3 ubiquitin-protein ligase WSV222 from White spot syndrome virus (isolate Shrimp/China/Tongan/1996) (WSSV).